The chain runs to 686 residues: Cation channel sperm-associated protein 1 (686 aa).

Residues 1–15 (MDQSSRRDESYHETH) are compositionally biased toward basic and acidic residues. Disordered regions lie at residues 1–57 (MDQS…QQPY), 97–177 (TLPN…NRDH), 207–271 (DHHH…KSTA), and 289–318 (QSRE…RAHK). Over 1–351 (MDQSSRRDES…QMILSLTQSL (351 aa)) the chain is Cytoplasmic. The span at 25 to 35 (SHPHPHPHPTL) shows a compositional bias: basic residues. The segment covering 128–142 (DPNHHPHQDDPHRPS) has biased composition (basic and acidic residues). Over residues 147-160 (HPSSTGSHQGTTHQ) the composition is skewed to polar residues. 2 stretches are compositionally biased toward basic residues: residues 211–229 (EGHH…KEQR) and 235–244 (HMHHHIHHRS). Residues 245–271 (PSASQLSHKSHSTLATSPSHVGSKSTA) show a composition bias toward polar residues. Over residues 308 to 318 (QKRKKAQRAHK) the composition is skewed to basic residues. A helical transmembrane segment spans residues 352-373 (GFETFIFIVVCLNTVILVAQTF). Residues 374 to 382 (TELEIRGEW) are Extracellular-facing. A helical transmembrane segment spans residues 383 to 404 (YFMVLDSIFLSIYVLEAVLKLI). At 405–412 (ALGLEYFY) the chain is on the cytoplasmic side. Residues 413–435 (DPWNNLDFFIMVMAVLDFVLLQI) traverse the membrane as a helical segment. The Extracellular portion of the chain corresponds to 436 to 446 (NSLSYSFYNHS). Residues 447–469 (LFRILKVFKSMRALRAIRVLRRL) traverse the membrane as a helical segment. The Cytoplasmic portion of the chain corresponds to 470–487 (SILTSLHEVAGTLSGSLP). A helical transmembrane segment spans residues 488–510 (SITAILTLMFTCLFLFSVVLRAL). The Extracellular portion of the chain corresponds to 511–521 (FQDSDPKRFQN). The segment at residues 522–534 (IFTTLFTLFTMLT) is an intramembrane region (helical; Pore-forming). The Extracellular segment spans residues 535–551 (LDDWSLIYIDNRAQGAW). Residues 552–577 (YIIPILMIYIVIQYFIFLNLVIAVLV) form a helical membrane-spanning segment. Residues 578–686 (DNFQMALLKG…FEAGDDDYGK (109 aa)) are Cytoplasmic-facing.

The protein belongs to the cation channel sperm-associated (TC 1.A.1.19) family. As to quaternary structure, component of the CatSper complex or CatSpermasome composed of the core pore-forming members CATSPER1, CATSPER2, CATSPER3 and CATSPER4 as well as auxiliary members CATSPERB, CATSPERG2, CATSPERD, CATSPERE, CATSPERZ, C2CD6/CATSPERT, SLCO6C1, TMEM249, TMEM262 and EFCAB9. HSPA1 may be an additional auxiliary complex member. The core complex members CATSPER1, CATSPER2, CATSPER3 and CATSPER4 form a heterotetrameric channel. The auxiliary CATSPERB, CATSPERG2, CATSPERD and CATSPERE subunits form a pavilion-like structure over the pore which stabilizes the complex through interactions with CATSPER4, CATSPER3, CATSPER1 and CATSPER2 respectively. SLCO6C1 interacts with CATSPERE, and TMEM262/CATSPERH interacts with CATSPERB, further stabilizing the complex. C2CD6/CATSPERT interacts at least with CATSPERD and is required for targeting the CatSper complex in the flagellar membrane. Interacts with Ca(v)3.3/CACNA1I, leading to suppression of T-type calcium channel activity. As to expression, testis-specific.

The protein resides in the cell projection. Its subcellular location is the cilium. The protein localises to the flagellum membrane. It catalyses the reaction Ca(2+)(in) = Ca(2+)(out). With respect to regulation, activated by intracellular alkalinization. In contrast to the human ortholog, not activated by progesterone. Its function is as follows. Pore-forming subunit of the CatSper complex, a sperm-specific voltage-gated calcium channel that plays a central role in sperm cell hyperactivation. Controls calcium entry to mediate the hyperactivated motility, a step needed for sperm motility which is essential late in the preparation of sperm for fertilization. The sequence is that of Cation channel sperm-associated protein 1 (Catsper1) from Mus musculus (Mouse).